Here is a 503-residue protein sequence, read N- to C-terminus: Drimenol monooxygenase (503 aa).

Residues 7 to 23 traverse the membrane as a helical segment; the sequence is MICIVVSGLLLYSSRTS. Residue Ser-471 participates in heme binding.

It belongs to the cytochrome P450 family. The cofactor is heme.

The protein resides in the membrane. It carries out the reaction (5S,9S,10S)-drim-7-en-11-ol + reduced [NADPH--hemoprotein reductase] + O2 = (5S,10S)-(9R)-7-drimene-11,12-diol + oxidized [NADPH--hemoprotein reductase] + H2O + H(+). Functionally, catalyzes the conversion of drimenol to drimendiol, a precursor of the sesquiterpenoid polygodial. Polygodial has been shown to be an antifeedant for a number of herbivorous insects. In Persicaria hydropiper (Marshpepper knotweed), this protein is Drimenol monooxygenase.